The following is a 72-amino-acid chain: Delta-actitoxin-Avd2b 3 (72 aa).

The N-terminal stretch at 1–21 is a signal peptide; the sequence is MMSRLLVFLMLGAAFMLVVSA. The propeptide occupies 22-42; it reads NDAYGDEPAFKDLNQGDESLG. 3 disulfide bridges follow: Cys-47–Cys-62, Cys-48–Cys-56, and Cys-50–Cys-67.

Belongs to the sea anemone short toxin (type III) family.

It is found in the secreted. The protein localises to the nematocyst. Voltage-gated sodium channel (Nav) inhibitor. 1 uM completely inhibits insect voltage-gated sodium channel inactivation (DmNav1 from D.melanogaster). The protein is Delta-actitoxin-Avd2b 3 of Anemonia viridis (Snakelocks anemone).